A 184-amino-acid chain; its full sequence is ATP synthase subunit b, chloroplastic (184 aa).

A helical membrane pass occupies residues 27–49; the sequence is LATNPINLSVVLGVLIFFGKGVL.

This sequence belongs to the ATPase B chain family. As to quaternary structure, F-type ATPases have 2 components, F(1) - the catalytic core - and F(0) - the membrane proton channel. F(1) has five subunits: alpha(3), beta(3), gamma(1), delta(1), epsilon(1). F(0) has four main subunits: a(1), b(1), b'(1) and c(10-14). The alpha and beta chains form an alternating ring which encloses part of the gamma chain. F(1) is attached to F(0) by a central stalk formed by the gamma and epsilon chains, while a peripheral stalk is formed by the delta, b and b' chains.

The protein resides in the plastid. Its subcellular location is the chloroplast thylakoid membrane. Its function is as follows. F(1)F(0) ATP synthase produces ATP from ADP in the presence of a proton or sodium gradient. F-type ATPases consist of two structural domains, F(1) containing the extramembraneous catalytic core and F(0) containing the membrane proton channel, linked together by a central stalk and a peripheral stalk. During catalysis, ATP synthesis in the catalytic domain of F(1) is coupled via a rotary mechanism of the central stalk subunits to proton translocation. Functionally, component of the F(0) channel, it forms part of the peripheral stalk, linking F(1) to F(0). This Carica papaya (Papaya) protein is ATP synthase subunit b, chloroplastic.